Consider the following 625-residue polypeptide: Chaperone protein DnaK (625 aa).

At T197 the chain carries Phosphothreonine; by autocatalysis. Positions 598–625 (AYAKEQGGTQQGTDTKKKDDDVIDAEVE) are disordered.

This sequence belongs to the heat shock protein 70 family.

Its function is as follows. Acts as a chaperone. The protein is Chaperone protein DnaK of Helicobacter hepaticus (strain ATCC 51449 / 3B1).